The primary structure comprises 437 residues: Immunoglobulin superfamily member 11 (437 aa).

The signal sequence occupies residues 1 to 22; the sequence is MTCRGSPLAPLLLFSLHGVAAS. The Ig-like V-type domain maps to 23–136; sequence LEVSESPGSV…DRGGRNIGVT (114 aa). The Extracellular portion of the chain corresponds to 23-241; it reads LEVSESPGSV…VISPQPRSIG (219 aa). 2 disulfides stabilise this stretch: Cys44-Cys120 and Cys165-Cys215. The N-linked (GlcNAc...) asparagine glycan is linked to Asn102. Residues 144–234 enclose the Ig-like C2-type domain; that stretch reads PSAPHCQIQG…TCLLDLQVIS (91 aa). A helical membrane pass occupies residues 242-262; sequence LIAGAIGTGAVIIIFCIALIL. Residues 263–437 lie on the Cytoplasmic side of the membrane; sequence GAFFYWRSKN…PAQSRAGSLV (175 aa). Arg379 is modified (omega-N-methylarginine). The disordered stretch occupies residues 382–405; the sequence is SLPAVSRSNGSVSRKARPPPVPSL.

N-glycosylated.

The protein resides in the cell membrane. Functionally, functions as a cell adhesion molecule through homophilic interaction. Stimulates cell growth. The protein is Immunoglobulin superfamily member 11 (IGSF11) of Bos taurus (Bovine).